Consider the following 940-residue polypeptide: Isoleucine--tRNA ligase (940 aa).

Positions 59 to 69 match the 'HIGH' region motif; the sequence is PYANGDIHIGH. E563 provides a ligand contact to L-isoleucyl-5'-AMP. The short motif at 604–608 is the 'KMSKS' region element; sequence KMSKS. K607 serves as a coordination point for ATP. C903, C906, C923, and C926 together coordinate Zn(2+).

The protein belongs to the class-I aminoacyl-tRNA synthetase family. IleS type 1 subfamily. Monomer. Zn(2+) serves as cofactor.

It is found in the cytoplasm. It carries out the reaction tRNA(Ile) + L-isoleucine + ATP = L-isoleucyl-tRNA(Ile) + AMP + diphosphate. Its function is as follows. Catalyzes the attachment of isoleucine to tRNA(Ile). As IleRS can inadvertently accommodate and process structurally similar amino acids such as valine, to avoid such errors it has two additional distinct tRNA(Ile)-dependent editing activities. One activity is designated as 'pretransfer' editing and involves the hydrolysis of activated Val-AMP. The other activity is designated 'posttransfer' editing and involves deacylation of mischarged Val-tRNA(Ile). The protein is Isoleucine--tRNA ligase of Wigglesworthia glossinidia brevipalpis.